Consider the following 410-residue polypeptide: Aminopeptidase AmpS (410 aa).

Glu-250, Glu-316, Glu-340, His-345, His-378, and Asp-380 together coordinate a divalent metal cation.

It belongs to the peptidase M29 family. The cofactor is Co(2+). Zn(2+) is required as a cofactor. Requires Mg(2+) as cofactor.

Functionally, metal-dependent exopeptidase. This chain is Aminopeptidase AmpS (ampS), found in Bacillus subtilis (strain 168).